Consider the following 539-residue polypeptide: Bifunctional purine biosynthesis protein PurH (539 aa).

In terms of domain architecture, MGS-like spans 8–159 (FPIPDLHRVR…KNYAYTGVVT (152 aa)).

It belongs to the PurH family.

It carries out the reaction (6R)-10-formyltetrahydrofolate + 5-amino-1-(5-phospho-beta-D-ribosyl)imidazole-4-carboxamide = 5-formamido-1-(5-phospho-D-ribosyl)imidazole-4-carboxamide + (6S)-5,6,7,8-tetrahydrofolate. It catalyses the reaction IMP + H2O = 5-formamido-1-(5-phospho-D-ribosyl)imidazole-4-carboxamide. Its pathway is purine metabolism; IMP biosynthesis via de novo pathway; 5-formamido-1-(5-phospho-D-ribosyl)imidazole-4-carboxamide from 5-amino-1-(5-phospho-D-ribosyl)imidazole-4-carboxamide (10-formyl THF route): step 1/1. The protein operates within purine metabolism; IMP biosynthesis via de novo pathway; IMP from 5-formamido-1-(5-phospho-D-ribosyl)imidazole-4-carboxamide: step 1/1. This is Bifunctional purine biosynthesis protein PurH from Bartonella tribocorum (strain CIP 105476 / IBS 506).